Consider the following 580-residue polypeptide: Glutamine--tRNA ligase (580 aa).

A 'HIGH' region motif is present at residues 41–51 (PEPNGYLHIGH). Residues 42–44 (EPN) and 48–54 (HIGHAKA) each bind ATP. Residues D74 and Y218 each coordinate L-glutamine. Residues T237, 285-286 (RL), and 293-295 (MSK) contribute to the ATP site. A 'KMSKS' region motif is present at residues 292-296 (VMSKR).

Belongs to the class-I aminoacyl-tRNA synthetase family. In terms of assembly, monomer.

The protein localises to the cytoplasm. It carries out the reaction tRNA(Gln) + L-glutamine + ATP = L-glutaminyl-tRNA(Gln) + AMP + diphosphate. This is Glutamine--tRNA ligase from Xylella fastidiosa (strain M12).